The chain runs to 83 residues: Exodeoxyribonuclease 7 small subunit (83 aa).

The segment at 63–83 (VQNDDGTTGTEPLADTGESGR) is disordered.

It belongs to the XseB family. Heterooligomer composed of large and small subunits.

It localises to the cytoplasm. It catalyses the reaction Exonucleolytic cleavage in either 5'- to 3'- or 3'- to 5'-direction to yield nucleoside 5'-phosphates.. Functionally, bidirectionally degrades single-stranded DNA into large acid-insoluble oligonucleotides, which are then degraded further into small acid-soluble oligonucleotides. The chain is Exodeoxyribonuclease 7 small subunit from Gluconobacter oxydans (strain 621H) (Gluconobacter suboxydans).